The primary structure comprises 684 residues: Probable metal-nicotianamine transporter YSL9 (684 aa).

Over residues 1-10 (MKQERRRKRQ) the composition is skewed to basic residues. A disordered region spans residues 1-55 (MKQERRRKRQPGPPRLELVVAHPREEEMAGLDGGGDAEEGATHARGGGGAPPPWR). 14 helical membrane passes run 58–78 (LTAR…VIVM), 82–102 (LTTG…FVVL), 130–150 (CAVA…LLGL), 174–194 (GIAW…LALV), 234–254 (VNGF…QWFY), 295–315 (LVNL…WPLI), 341–361 (FICV…IVAL), 402–422 (LAFS…PMMF), 430–450 (VVIA…GAGL), 462–482 (IALF…AGLV), 515–535 (IIAQ…TFFL), 568–588 (FSAL…FAVA), 612–632 (VPFL…LIVF), and 642–662 (AALM…LWIF).

Belongs to the YSL (TC 2.A.67.2) family.

It is found in the membrane. Functionally, may be involved in the transport of nicotianamine-chelated metals. This Oryza sativa subsp. japonica (Rice) protein is Probable metal-nicotianamine transporter YSL9 (YSL9).